The sequence spans 148 residues: MASKRILKELKDLQKDPPSNCSAGPVAEDMFHWQATIMGPPESPYAGGVFLVSIHFPPDYPFKPPKVSFKTKVYHPNINSNGSICLDILKEQWSPALTISKVLLSICSLLTDPNPDDPLVPEIAHMYKTDRSKYESTARSWTQKYAMG.

The 147-residue stretch at 1 to 147 (MASKRILKEL…ARSWTQKYAM (147 aa)) folds into the UBC core domain. Catalysis depends on C85, which acts as the Glycyl thioester intermediate.

Belongs to the ubiquitin-conjugating enzyme family. In terms of assembly, interacts with the E3 ubiquitin-protein ligases MBR1 and MBR2. Ubiquitously expressed. Mainly in petals.

It carries out the reaction S-ubiquitinyl-[E1 ubiquitin-activating enzyme]-L-cysteine + [E2 ubiquitin-conjugating enzyme]-L-cysteine = [E1 ubiquitin-activating enzyme]-L-cysteine + S-ubiquitinyl-[E2 ubiquitin-conjugating enzyme]-L-cysteine.. It functions in the pathway protein modification; protein ubiquitination. In terms of biological role, accepts the ubiquitin from the E1 complex and catalyzes its covalent attachment to other proteins. Mediates the selective degradation of short-lived and abnormal proteins. The sequence is that of Ubiquitin-conjugating enzyme E2 11 (UBC11) from Arabidopsis thaliana (Mouse-ear cress).